The sequence spans 750 residues: MIIRSPEPEVKILVDRDPIKTSFEEWAKPGHFSRTIAKGPDTTTWIWNLHADAHDFDSHTSDLEEISRKVFSAHFGQLSIIFLWLSGMYFHGARFSNYEAWLSDPTHIGPSAQVVWPIVGQEILNGDVGGGFRGIQITSGFFQIWRASGITSELQLYCTAIGALVFAALMLFAGWFHYHKAAPKLAWFQDVESMLNHHLAGLLGLGSLSWAGHQVHVSLPINQFLNAGVDPKEIPLPHEFILNRDLLAQLYPSFAEGATPFFTLNWSKYSEFLTFRGGLDPVTGGLWLTDIAHHHLAIAILFLIAGHMYRTNWGIGHGLKDILEAHKGPFTGQGHKGLYEILTTSWHAQLSLNLAMLGSLTIVVAHHMYSMPPYPYLATDYATQLSLFTHHMWIGGFLIVGAAAHAAIFMVRDYDPTNRYNDLLDRVLRHRDAIISHLNWVCIFLGFHSFGLYIHNDTMSALGRPQDMFSDTAIQLQPVFAQWIQNTHALAPGVTAPGETASTSLTWGGGELVAVGGKVALLPIPLGTADFLVHHIHAFTIHVTVLILLKGVLFARSSRLIPDKANLGFRFPCDGPGRGGTCQVSAWDHVFLGLFWMYNAISVVIFHFSWKMQSDVWGSISDQGVVTHITGGNFAQSSITINGWLRDFLWAQASQVIQSYGSSLSAYGLFFLGAHFVWAFSLMFLFSGRGYWQELIESIVWAHNKLKVAPATQPRALSIVQGRAVGVTHYLLGGIATTWAFFLARIIAVG.

The next 8 membrane-spanning stretches (helical) occupy residues 70-93, 156-179, 195-219, 291-309, 346-369, 385-411, 433-455, and 531-549; these read VFSA…FHGA, LYCT…FHYH, LNHH…HVSL, IAHH…GHMY, WHAQ…HHMY, LSLF…IFMV, AIIS…LYIH, and FLVH…LILL. The [4Fe-4S] cluster site is built by C573 and C582. The next 2 membrane-spanning stretches (helical) occupy residues 589–610 and 664–686; these read HVFL…HFSW and LSAY…MFLF. Position 675 (H675) interacts with chlorophyll a'. 2 residues coordinate chlorophyll a: M683 and Y691. A phylloquinone-binding site is contributed by W692. The helical transmembrane segment at 724–744 threads the bilayer; that stretch reads AVGVTHYLLGGIATTWAFFLA.

It belongs to the PsaA/PsaB family. The PsaA/B heterodimer binds the P700 chlorophyll special pair and subsequent electron acceptors. PSI consists of a core antenna complex that captures photons, and an electron transfer chain that converts photonic excitation into a charge separation. The eukaryotic PSI reaction center is composed of at least 11 subunits. The cofactor is P700 is a chlorophyll a/chlorophyll a' dimer, A0 is one or more chlorophyll a, A1 is one or both phylloquinones and FX is a shared 4Fe-4S iron-sulfur center..

The protein resides in the plastid. It localises to the chloroplast thylakoid membrane. It carries out the reaction reduced [plastocyanin] + hnu + oxidized [2Fe-2S]-[ferredoxin] = oxidized [plastocyanin] + reduced [2Fe-2S]-[ferredoxin]. Its function is as follows. PsaA and PsaB bind P700, the primary electron donor of photosystem I (PSI), as well as the electron acceptors A0, A1 and FX. PSI is a plastocyanin-ferredoxin oxidoreductase, converting photonic excitation into a charge separation, which transfers an electron from the donor P700 chlorophyll pair to the spectroscopically characterized acceptors A0, A1, FX, FA and FB in turn. Oxidized P700 is reduced on the lumenal side of the thylakoid membrane by plastocyanin. The sequence is that of Photosystem I P700 chlorophyll a apoprotein A1 from Aethionema cordifolium (Lebanon stonecress).